Consider the following 240-residue polypeptide: Large ribosomal subunit protein uL1 (240 aa).

The protein belongs to the universal ribosomal protein uL1 family. As to quaternary structure, part of the 50S ribosomal subunit.

Its function is as follows. Binds directly to 23S rRNA. The L1 stalk is quite mobile in the ribosome, and is involved in E site tRNA release. Functionally, protein L1 is also a translational repressor protein, it controls the translation of the L11 operon by binding to its mRNA. The chain is Large ribosomal subunit protein uL1 from Nocardioides sp. (strain ATCC BAA-499 / JS614).